Here is a 362-residue protein sequence, read N- to C-terminus: MPHGPGTSARPVRVLVVDDSALVRETLAAVLASDPGIEVIGAAGDPYAAVERMRRQAPDVITLDIEMPRMDGLTFLRKLMAQHPIPVVICSSLATAGAEPALRALECGAVEVVAKPRLGTRRFLEESRVRLCDAVKAAARAGPGRPRASAPLVQAKLTADAVLARPRSDAVLQTTERVVVVGASTGGTEALRELLAALPGDAPGLVIVQHMPEVFTAAFARRLDGLCAVAVKEAADGDAVVPGRALIAPGNRHTLLRRSGARYHVEVRDGPLVCRHRPSVDVLFRSAARYAGRNAVGVIMTGMGDDGARGLAELKRSGADTIAQDEATSVVFGMPREAIRLGAADRVLPLPAIPPELLRLCR.

One can recognise a Response regulatory domain in the interval 13–130 (RVLVVDDSAL…RRFLEESRVR (118 aa)). Asp-64 is modified (4-aspartylphosphate). The region spanning 172–362 (LQTTERVVVV…IPPELLRLCR (191 aa)) is the CheB-type methylesterase domain. Catalysis depends on residues Ser-184, His-210, and Asp-306.

This sequence belongs to the CheB family. Post-translationally, phosphorylated by CheA. Phosphorylation of the N-terminal regulatory domain activates the methylesterase activity.

It localises to the cytoplasm. It catalyses the reaction [protein]-L-glutamate 5-O-methyl ester + H2O = L-glutamyl-[protein] + methanol + H(+). It carries out the reaction L-glutaminyl-[protein] + H2O = L-glutamyl-[protein] + NH4(+). Functionally, involved in chemotaxis. Part of a chemotaxis signal transduction system that modulates chemotaxis in response to various stimuli. Catalyzes the demethylation of specific methylglutamate residues introduced into the chemoreceptors (methyl-accepting chemotaxis proteins or MCP) by CheR. Also mediates the irreversible deamidation of specific glutamine residues to glutamic acid. This chain is Protein-glutamate methylesterase/protein-glutamine glutaminase 5, found in Anaeromyxobacter dehalogenans (strain 2CP-C).